Here is a 66-residue protein sequence, read N- to C-terminus: Large ribosomal subunit protein bL33c (66 aa).

This sequence belongs to the bacterial ribosomal protein bL33 family.

The protein localises to the plastid. In Epifagus virginiana (Beechdrops), this protein is Large ribosomal subunit protein bL33c (rpl33).